We begin with the raw amino-acid sequence, 1418 residues long: Sterol 3-beta-glucosyltransferase (1418 aa).

The segment covering 1–16 (MRPFLDDAKRRVDRKL) has biased composition (basic and acidic residues). Disordered regions lie at residues 1–59 (MRPF…SREG), 83–188 (ARFD…RSAT), and 207–233 (LKASSTERSQPSLDESGEKGPRGASVS). The segment covering 18 to 28 (ASRQSLSTSRL) has biased composition (polar residues). 2 stretches are compositionally biased toward basic and acidic residues: residues 35–44 (DRLKDNHDAQ) and 95–105 (SEQRPRKESSV). The span at 106-115 (RKGTSASANT) shows a compositional bias: polar residues. Residues 116–126 (SSPLDSSQRSS) show a composition bias toward low complexity. Composition is skewed to basic and acidic residues over residues 127–139 (SRTDGKSEKESGT) and 147–166 (TISDHKLFRPFESNSKHEPQ). Residues 209–219 (ASSTERSQPSL) are compositionally biased toward polar residues. One can recognise a GRAM 1 domain in the interval 249–288 (EKVLVEYACSLLQSILLQGYMYVTEGHICFYAYLPKKSTV). Residues 289-387 (AIKSGYLYKR…WVKALQKVIF (99 aa)) enclose the PH domain. The interval 462–651 (ISSQHLSPQP…DPTKSFSGAP (190 aa)) is disordered. Polar residues predominate over residues 486 to 497 (RWSLTSGTSRVL). The segment covering 508–519 (ASASTSHTSLAH) has biased composition (low complexity). The segment covering 534–575 (SESILNSFEQGTESSAAWQSMTDAAESASQILNRSDVFQSPT) has biased composition (polar residues). Residues 578–598 (GLDRRPSGGERRGRRNSDETA) show a composition bias toward basic and acidic residues. Residues 599–612 (RSLSTRANVGTGQQ) are compositionally biased toward polar residues. Residues 615–633 (ELGRRMDGDTSGREARDST) show a composition bias toward basic and acidic residues. The segment covering 635–651 (ESDQYTQDPTKSFSGAP) has biased composition (polar residues). A GRAM 2 domain is found at 733–799 (DRFRAHFALP…RDIENVEKEK (67 aa)). S920, R921, D923, A1223, H1225, H1238, G1242, T1243, D1262, and Q1263 together coordinate UDP-alpha-D-glucose. The tract at residues 1339-1418 (SIASSTPFSP…SGPGRKLSGR (80 aa)) is disordered. Residues 1341–1355 (ASSTPFSPTPSAKTT) show a composition bias toward low complexity. Over residues 1358-1379 (QDADDDVEDSEEWTFVGDDTDM) the composition is skewed to acidic residues. Residues 1380 to 1391 (EMSRRLRDRAIS) show a composition bias toward basic and acidic residues.

Belongs to the glycosyltransferase 28 family.

It localises to the cytoplasm. Its subcellular location is the preautophagosomal structure membrane. It catalyses the reaction a sterol + UDP-alpha-D-glucose = a sterol 3-beta-D-glucoside + UDP + H(+). The enzyme catalyses ergosterol + UDP-alpha-D-glucose = ergosteryl 3-beta-D-glucoside + UDP + H(+). In terms of biological role, sterol glycosyltransferase responsible for the glycosylation of ergosterol to form ergosterol-glucoside. In Neosartorya fischeri (strain ATCC 1020 / DSM 3700 / CBS 544.65 / FGSC A1164 / JCM 1740 / NRRL 181 / WB 181) (Aspergillus fischerianus), this protein is Sterol 3-beta-glucosyltransferase.